A 90-amino-acid chain; its full sequence is Small ribosomal subunit protein bS18 (90 aa).

The tract at residues 1-23 (MKPMRQKNTRAQGNKSISNALAS) is disordered. Positions 9 to 21 (TRAQGNKSISNAL) are enriched in polar residues.

The protein belongs to the bacterial ribosomal protein bS18 family. In terms of assembly, part of the 30S ribosomal subunit. Forms a tight heterodimer with protein bS6.

Binds as a heterodimer with protein bS6 to the central domain of the 16S rRNA, where it helps stabilize the platform of the 30S subunit. This chain is Small ribosomal subunit protein bS18, found in Chlorobium luteolum (strain DSM 273 / BCRC 81028 / 2530) (Pelodictyon luteolum).